We begin with the raw amino-acid sequence, 141 residues long: Nucleoside diphosphate kinase (141 aa).

Lys11, Phe59, Arg87, Thr93, Arg104, and Asn114 together coordinate ATP. Catalysis depends on His117, which acts as the Pros-phosphohistidine intermediate.

It belongs to the NDK family. Homotetramer. Mg(2+) serves as cofactor.

The protein localises to the cytoplasm. The enzyme catalyses a 2'-deoxyribonucleoside 5'-diphosphate + ATP = a 2'-deoxyribonucleoside 5'-triphosphate + ADP. It catalyses the reaction a ribonucleoside 5'-diphosphate + ATP = a ribonucleoside 5'-triphosphate + ADP. In terms of biological role, major role in the synthesis of nucleoside triphosphates other than ATP. The ATP gamma phosphate is transferred to the NDP beta phosphate via a ping-pong mechanism, using a phosphorylated active-site intermediate. In Burkholderia cenocepacia (strain HI2424), this protein is Nucleoside diphosphate kinase.